The sequence spans 154 residues: Endoribonuclease YbeY (154 aa).

Residues His114, His118, and His124 each contribute to the Zn(2+) site.

Belongs to the endoribonuclease YbeY family. Requires Zn(2+) as cofactor.

Its subcellular location is the cytoplasm. Its function is as follows. Single strand-specific metallo-endoribonuclease involved in late-stage 70S ribosome quality control and in maturation of the 3' terminus of the 16S rRNA. In Anaplasma phagocytophilum (strain HZ), this protein is Endoribonuclease YbeY.